Here is an 89-residue protein sequence, read N- to C-terminus: Small ribosomal subunit protein uS15 (89 aa).

It belongs to the universal ribosomal protein uS15 family. Part of the 30S ribosomal subunit. Forms a bridge to the 50S subunit in the 70S ribosome, contacting the 23S rRNA.

Functionally, one of the primary rRNA binding proteins, it binds directly to 16S rRNA where it helps nucleate assembly of the platform of the 30S subunit by binding and bridging several RNA helices of the 16S rRNA. Forms an intersubunit bridge (bridge B4) with the 23S rRNA of the 50S subunit in the ribosome. This is Small ribosomal subunit protein uS15 from Serratia proteamaculans (strain 568).